We begin with the raw amino-acid sequence, 481 residues long: Tryptophan--tRNA ligase, cytoplasmic (481 aa).

One can recognise a WHEP-TRS domain in the interval Ser12–Pro68. A disordered region spans residues Gly65 to Ser85. Lys158 carries the post-translational modification N6-succinyllysine. A 'HIGH' region motif is present at residues Pro168–His177. The 'KMSKS' region motif lies at Lys353–Ser357. Ser355 carries the phosphoserine modification.

Belongs to the class-I aminoacyl-tRNA synthetase family. As to quaternary structure, homodimer. Interacts with oxidized form of GAPDH. Proteolytic cleavage generates 2 forms; T1-TrpRS and T2-TrpRS.

Its subcellular location is the cytoplasm. The enzyme catalyses tRNA(Trp) + L-tryptophan + ATP = L-tryptophyl-tRNA(Trp) + AMP + diphosphate + H(+). Catalyzes the attachment of tryptophan to tRNA(Trp) in a two-step reaction: tryptophan is first activated by ATP to form Trp-AMP and then transferred to the acceptor end of the tRNA(Trp). Could also possess an angiostatic activity. This Rattus norvegicus (Rat) protein is Tryptophan--tRNA ligase, cytoplasmic.